We begin with the raw amino-acid sequence, 64 residues long: Large ribosomal subunit protein bL35 (64 aa).

Residues 1 to 28 (MPKVKTKSGAKKRFKLTGSGKIKRKSAY) are disordered.

The protein belongs to the bacterial ribosomal protein bL35 family.

This is Large ribosomal subunit protein bL35 from Cytophaga hutchinsonii (strain ATCC 33406 / DSM 1761 / CIP 103989 / NBRC 15051 / NCIMB 9469 / D465).